Reading from the N-terminus, the 1313-residue chain is Target of rapamycin complex 1 subunit mip1 (1313 aa).

The disordered stretch occupies residues 1–35 (MNDRISEVSGSSRARRSVLSYGTTETGSDRYTENS). Phosphoserine occurs at positions 834, 837, and 882. WD repeat units lie at residues 986–1029 (TFNN…NSFK), 1033–1074 (SATT…KVEL), 1087–1126 (GDRN…CYAN), 1130–1170 (RSSN…RDSL), 1176–1216 (EHSS…SLQT), 1219–1259 (TDNS…NTFR), and 1268–1308 (PKPS…IHTD).

The protein belongs to the WD repeat RAPTOR family. The target of rapamycin complex 1 (TORC1) is composed of at least mip1, pop3/wat1, tco89, toc1 and tor2.

Its subcellular location is the cytoplasm. Functionally, component of TORC1, which regulates multiple cellular processes to control cell growth in response to environmental signals. Tor2 is essential for growth. Nutrient limitation and environmental stress signals cause inactivation of TORC1. Active TORC1 positively controls cell growth and ribosome biogenesis by regulating ribosomal protein gene expression. TORC1 negatively controls G1 cell-cycle arrest, sexual development and amino acid uptake. Represses mating, meiosis and sporulation efficiency by interfering with the functions of the transcription factor ste11 and the meiosis-promoting RNA-binding protein mei2. This is Target of rapamycin complex 1 subunit mip1 from Schizosaccharomyces pombe (strain 972 / ATCC 24843) (Fission yeast).